We begin with the raw amino-acid sequence, 441 residues long: Membrane protein PB1A10.07c (441 aa).

11 consecutive transmembrane segments (helical) span residues 1–21 (MGAV…VVGI), 41–61 (VGAV…SWCM), 97–117 (LSFT…LCNT), 128–148 (GLWP…FFIP), 158–178 (IISV…LVDF), 206–226 (TVGM…FFCA), 235–255 (INTI…HPTI), 263–283 (GLAQ…SALA), 307–327 (VIGA…AASS), 364–384 (YNFI…ASLL), and 415–435 (IITS…PVFF).

This sequence belongs to the TDE1 family.

The protein resides in the membrane. In Schizosaccharomyces pombe (strain 972 / ATCC 24843) (Fission yeast), this protein is Membrane protein PB1A10.07c.